A 203-amino-acid chain; its full sequence is ADP-ribosylation factor-like protein 6-interacting protein 1 (203 aa).

At 1–41 (MAEGDNRSSNLLAVETASLEEQLQGWGEVMLMADKVLRWER) the chain is on the cytoplasmic side. A helical transmembrane segment spans residues 42-62 (AWFPPAIMGVVSLLFLIIYYL). The Lumenal segment spans residues 63–65 (DPS). Residues 66-86 (VLSGVSCFVMFLCLADYLVPI) traverse the membrane as a helical segment. Topologically, residues 87 to 133 (LAPRIFGSNKWTTEQQQRFHEICSNLVKTRRRAVGWWKRLFSLKEEK) are cytoplasmic. The chain crosses the membrane as a helical span at residues 134–175 (PKMYFMTMIISLAAVAWVGQQVHNLLLTYLIVTFVLLLPGLN). The Lumenal portion of the chain corresponds to 176–203 (QHGIILKYIGMAKREINKLLKQKEKKNE).

Belongs to the ARL6ip family. Homooligomer. Heterodimer with ARL6IP5. Interacts with ARL6. Interacts with TMEM33. Interacts with ATL1. Expressed in the cerebral cortex, cerebellum, hippocampus, olfactory bulbs, medulla oblongate and limbic system (at protein level). Ubiquitous. Expressed in all hematopoietic cell lineages, with highest levels in early myeloid progenitor cells.

The protein resides in the endomembrane system. It is found in the endoplasmic reticulum membrane. The protein localises to the endoplasmic reticulum. Its function is as follows. Positively regulates SLC1A1/EAAC1-mediated glutamate transport by increasing its affinity for glutamate in a PKC activity-dependent manner. Promotes the catalytic efficiency of SLC1A1/EAAC1 probably by reducing its interaction with ARL6IP5, a negative regulator of SLC1A1/EAAC1-mediated glutamate transport. Plays a role in the formation and stabilization of endoplasmic reticulum tubules. Negatively regulates apoptosis, possibly by modulating the activity of caspase-9 (CASP9). Inhibits cleavage of CASP9-dependent substrates and downstream markers of apoptosis but not CASP9 itself. May be involved in protein transport, membrane trafficking, or cell signaling during hematopoietic maturation. In Mus musculus (Mouse), this protein is ADP-ribosylation factor-like protein 6-interacting protein 1 (Arl6ip1).